A 571-amino-acid chain; its full sequence is E3 ubiquitin-protein ligase RNF168 (571 aa).

The RING-type zinc finger occupies 16-55 (CGICMEILVEPVTLPCNHTLCKPCFQSTVEKASLCCPFCR). S70 carries the post-translational modification Phosphoserine. The short motif at 110–128 (LSKPGELRREYEEEISKVA) is the LR motif 1 element. The residue at position 134 (S134) is a Phosphoserine. A UMI motif motif is present at residues 143-151 (EEYIQRLLA). Disordered regions lie at residues 151–174 (AEEEEEEKRQAEKRRRAMEEQLKS) and 191–292 (EGSI…GADS). The MIU motif 1 motif lies at 168-191 (MEEQLKSDEELARKLSIDINNFCE). S197 bears the Phosphoserine mark. The span at 202 to 214 (RKSDPVTPKSEKK) shows a compositional bias: basic and acidic residues. K210 participates in a covalent cross-link: Glycyl lysine isopeptide (Lys-Gly) (interchain with G-Cter in SUMO2). The span at 231–242 (PKSQFGSASHSE) shows a compositional bias: polar residues. Residues 243–263 (AVQEVRKDSVSKDIDSSDRKS) show a composition bias toward basic and acidic residues. T362 carries the post-translational modification Phosphothreonine. 2 disordered regions span residues 390-422 (NQESSFEAVKDPCFSAKRRKVSPESSPDQEETE) and 459-560 (KEQM…ISQK). Phosphoserine occurs at positions 411, 414, and 415. Residues 439–462 (RHKQEEQDRLLALQLQKEVDKEQM) carry the MIU motif 2 motif. The LR motif 2 signature appears at 466 to 477 (RQKGSPDEYHLR). S470 is modified (phosphoserine). Positions 508–519 (PTPERGSRDKNR) are enriched in basic and acidic residues. 2 stretches are compositionally biased toward polar residues: residues 520–530 (QVSLKMQLKQS) and 549–560 (SAHSLQPSISQK). A Glycyl lysine isopeptide (Lys-Gly) (interchain with G-Cter in SUMO2) cross-link involves residue K528.

Belongs to the RNF168 family. In terms of assembly, monomer. Interacts with UBE2N/UBC13. In terms of processing, sumoylated with SUMO1 by PIAS4 in response to double-strand breaks (DSBs). Ubiquitinated.

It localises to the nucleus. The enzyme catalyses S-ubiquitinyl-[E2 ubiquitin-conjugating enzyme]-L-cysteine + [acceptor protein]-L-lysine = [E2 ubiquitin-conjugating enzyme]-L-cysteine + N(6)-ubiquitinyl-[acceptor protein]-L-lysine.. The protein operates within protein modification; protein ubiquitination. Its function is as follows. E3 ubiquitin-protein ligase required for accumulation of repair proteins to sites of DNA damage. Acts with UBE2N/UBC13 to amplify the RNF8-dependent histone ubiquitination. Recruited to sites of DNA damage at double-strand breaks (DSBs) by binding to ubiquitinated histone H2A and H2AX and amplifies the RNF8-dependent H2A ubiquitination, promoting the formation of 'Lys-63'-linked ubiquitin conjugates. This leads to concentrate ubiquitinated histones H2A and H2AX at DNA lesions to the threshold required for recruitment of TP53BP1 and BRCA1. Also recruited at DNA interstrand cross-links (ICLs) sites and promotes accumulation of 'Lys-63'-linked ubiquitination of histones H2A and H2AX, leading to recruitment of FAAP20/C1orf86 and Fanconi anemia (FA) complex, followed by interstrand cross-link repair. H2A ubiquitination also mediates the ATM-dependent transcriptional silencing at regions flanking DSBs in cis, a mechanism to avoid collision between transcription and repair intermediates. Also involved in class switch recombination in immune system, via its role in regulation of DSBs repair. Following DNA damage, promotes the ubiquitination and degradation of JMJD2A/KDM4A in collaboration with RNF8, leading to unmask H4K20me2 mark and promote the recruitment of TP53BP1 at DNA damage sites. Not able to initiate 'Lys-63'-linked ubiquitination in vitro; possibly due to partial occlusion of the UBE2N/UBC13-binding region. Catalyzes monoubiquitination of 'Lys-13' and 'Lys-15' of nucleosomal histone H2A (H2AK13Ub and H2AK15Ub, respectively). This Homo sapiens (Human) protein is E3 ubiquitin-protein ligase RNF168.